Reading from the N-terminus, the 403-residue chain is E2F transcription factor-like E2FE (403 aa).

The DNA-binding element occupies 34 to 99 (RKQKSLGLLC…RAKNQYTWKG (66 aa)). The tract at residues 128–167 (VKGSDDEDDDEESSQPHSSSQTDSSKPGSLPQSSDPSKID) is disordered. The segment covering 142-152 (QPHSSSQTDSS) has biased composition (low complexity). Positions 153–163 (KPGSLPQSSDP) are enriched in polar residues. The DNA-binding element occupies 169 to 250 (RREKSLGLLT…SRKPAFKWLG (82 aa)). The disordered stretch occupies residues 282–319 (VKRSKSSSSSQENATERRLKMKKHSTPESSYNKSFDVH).

Belongs to the E2F/DP family. In terms of tissue distribution, expressed exclusively in mitotically dividing cells. Highly expressed in young leaves and mature flowers. Lower expression in young stalk and in young and mature flowers.

The protein localises to the nucleus. Functionally, inhibitor of E2F-dependent activation of gene expression. Binds specifically the E2 recognition site without interacting with DP proteins and prevents transcription activation by E2F/DP heterodimers. Controls the timing of endocycle onset and inhibits endoreduplication. The chain is E2F transcription factor-like E2FE (E2FE) from Arabidopsis thaliana (Mouse-ear cress).